The primary structure comprises 117 residues: Small ribosomal subunit protein uS19c (117 aa).

The protein belongs to the universal ribosomal protein uS19 family.

It localises to the plastid. Its function is as follows. Protein S19 forms a complex with S13 that binds strongly to the 16S ribosomal RNA. This Helicosporidium sp. subsp. Simulium jonesii (Green alga) protein is Small ribosomal subunit protein uS19c (rps19).